The sequence spans 658 residues: L-type lectin-domain containing receptor kinase V.4 (658 aa).

The first 25 residues, 1-25 (MSRTIGSRVIFLILALFCCTENSRG), serve as a signal peptide directing secretion. A legume-lectin like region spans residues 26–248 (KLVMQGSAGF…RAMHYMLSWF (223 aa)). Residues 26–280 (KLVMQGSAGF…EKSLVYRIVL (255 aa)) are Extracellular-facing. Residues N66 and N196 are each glycosylated (N-linked (GlcNAc...) asparagine). The chain crosses the membrane as a helical span at residues 281–301 (VTSLALVLFVALVASALSIFF). Residues 302-658 (YRRHKKVKEV…LTEPFTSRGR (357 aa)) lie on the Cytoplasmic side of the membrane. In terms of domain architecture, Protein kinase spans 334-592 (KGFKQLLGKG…LGVLCSHQAV (259 aa)). ATP is bound by residues 340–348 (LGKGGFGQV) and K363. The active-site Proton acceptor is D460.

This sequence in the C-terminal section; belongs to the protein kinase superfamily. Ser/Thr protein kinase family. The protein in the N-terminal section; belongs to the leguminous lectin family.

It is found in the cell membrane. It catalyses the reaction L-seryl-[protein] + ATP = O-phospho-L-seryl-[protein] + ADP + H(+). The catalysed reaction is L-threonyl-[protein] + ATP = O-phospho-L-threonyl-[protein] + ADP + H(+). Involved in resistance response to the pathogenic oomycetes Phytophthora infestans and Phytophthora capsici and to the pathogenic bacteria Pseudomonas syringae. In Arabidopsis thaliana (Mouse-ear cress), this protein is L-type lectin-domain containing receptor kinase V.4.